Consider the following 277-residue polypeptide: Sulfur carrier protein FdhD (277 aa).

Cys123 functions as the Cysteine persulfide intermediate in the catalytic mechanism.

Belongs to the FdhD family.

The protein resides in the cytoplasm. Its function is as follows. Required for formate dehydrogenase (FDH) activity. Acts as a sulfur carrier protein that transfers sulfur from IscS to the molybdenum cofactor prior to its insertion into FDH. This chain is Sulfur carrier protein FdhD, found in Pectobacterium atrosepticum (strain SCRI 1043 / ATCC BAA-672) (Erwinia carotovora subsp. atroseptica).